Consider the following 317-residue polypeptide: Hps1-dma1 cluster cytochrome P450 monooxygenase cyp3.1 (317 aa).

Residues 183–205 are disordered; sequence PAIETDRKTSSHSRSPTALADKQ. Cysteine 260 provides a ligand contact to heme.

It belongs to the cytochrome P450 family. The cofactor is heme.

The protein operates within secondary metabolite biosynthesis. In terms of biological role, cytochrome P450 monooxygenase; part of the hps1-dma1 gene cluster that probably mediates the biosynthesis a derivative of cyclopiazonic acid (CPA). The hybrid polyketide synthase-nonribosomal peptide synthetase (PKS-NRPS) nps1 might incorporates acetyl-CoA, malonyl-CoA, and tryptophan (Trp) and utilizes a C-terminal redox-incompetent reductase domain to make and release the tryptophan tetramic acid, cyclo-acetoacetyl-L-tryptophan (c-AATrp), as the first intermediate in the pathway. In addition, the cluster also includes the tryptophan dimethylallyltransferase dma1, the FAD-dependent oxidoreductase toxD, the cytochrome P450 monooxygenase cyp3.1 and the methyltransferase DOTSEDRAFT_139328; the latter 2 being not present in all CPA-producing fungi but involved in additional modifications that occur in biosynthesis the of a range of CPA and CPA-like products. Further studies are required to clarify whether the CPA-like hps1-dma1 cluster is functional or a non-functional relic reflecting evolution of D.septosporum. This is Hps1-dma1 cluster cytochrome P450 monooxygenase cyp3.1 (cyp3.1) from Dothistroma septosporum (strain NZE10 / CBS 128990) (Red band needle blight fungus).